The following is a 141-amino-acid chain: Nucleoside triphosphatase NudI (141 aa).

The Nudix hydrolase domain occupies 1–141 (MRQRTIVCPL…RHTLALKGLL (141 aa)). The Nudix box motif lies at 38–59 (GGVEPGERIEEALRREVREELG).

The protein belongs to the Nudix hydrolase family. NudI subfamily. In terms of assembly, monomer. Requires Mg(2+) as cofactor.

It catalyses the reaction a ribonucleoside 5'-triphosphate + H2O = a ribonucleoside 5'-phosphate + diphosphate + H(+). It carries out the reaction a 2'-deoxyribonucleoside 5'-triphosphate + H2O = a 2'-deoxyribonucleoside 5'-phosphate + diphosphate + H(+). The catalysed reaction is dUTP + H2O = dUMP + diphosphate + H(+). The enzyme catalyses dTTP + H2O = dTMP + diphosphate + H(+). It catalyses the reaction dCTP + H2O = dCMP + diphosphate + H(+). Its function is as follows. Catalyzes the hydrolysis of nucleoside triphosphates, with a preference for pyrimidine deoxynucleoside triphosphates (dUTP, dTTP and dCTP). This is Nucleoside triphosphatase NudI from Salmonella schwarzengrund (strain CVM19633).